The chain runs to 39 residues: Neuropeptide F (39 aa).

F39 bears the Phenylalanine amide mark.

The protein belongs to the NPY family. As to expression, neuronal somata and fibers.

Its subcellular location is the secreted. In terms of biological role, may have an important physiological role in neuroregulation. The chain is Neuropeptide F from Cornu aspersum (Brown garden snail).